The sequence spans 246 residues: MHILLSNDDGIQAEGIKTLAKELRKFAQVTVVAPDRNRSAASSSLTLVEPLRPMKLDNGDYSINGTPADCVHLALNGFLSGQIDLVVSGINAGVNLGDDVIYSGTVAAALEGRHLSLPAIAVSLDGRQHYESAAIIVSQLIPKLYGRLLKSREIININVPDLPYSEIKGIKVCHLGYRAAAADIIKQKDPRGEEIYWIGPIGLAENESEGTDFHAVKNGYVSITPIQTDMTAYHSMTALQQWLDKE.

Positions 8, 9, 39, and 91 each coordinate a divalent metal cation.

It belongs to the SurE nucleotidase family. A divalent metal cation serves as cofactor.

It localises to the cytoplasm. The enzyme catalyses a ribonucleoside 5'-phosphate + H2O = a ribonucleoside + phosphate. Its function is as follows. Nucleotidase that shows phosphatase activity on nucleoside 5'-monophosphates. The polypeptide is 5'-nucleotidase SurE (Histophilus somni (strain 129Pt) (Haemophilus somnus)).